The following is a 281-amino-acid chain: S-methyl-5'-thioadenosine phosphorylase (281 aa).

Phosphate contacts are provided by residues serine 15, arginine 58 to histidine 59, and threonine 91 to alanine 92. Methionine 194 provides a ligand contact to substrate. Threonine 195 serves as a coordination point for phosphate. A substrate-binding site is contributed by aspartate 218–aspartate 220.

The protein belongs to the PNP/MTAP phosphorylase family. MTAP subfamily. Homotrimer.

Its subcellular location is the cytoplasm. It localises to the nucleus. The enzyme catalyses S-methyl-5'-thioadenosine + phosphate = 5-(methylsulfanyl)-alpha-D-ribose 1-phosphate + adenine. It functions in the pathway amino-acid biosynthesis; L-methionine biosynthesis via salvage pathway; S-methyl-5-thio-alpha-D-ribose 1-phosphate from S-methyl-5'-thioadenosine (phosphorylase route): step 1/1. Functionally, catalyzes the reversible phosphorylation of S-methyl-5'-thioadenosine (MTA) to adenine and 5-methylthioribose-1-phosphate. Involved in the breakdown of MTA, a major by-product of polyamine biosynthesis. Responsible for the first step in the methionine salvage pathway after MTA has been generated from S-adenosylmethionine. Has broad substrate specificity with 6-aminopurine nucleosides as preferred substrates. In Xenopus tropicalis (Western clawed frog), this protein is S-methyl-5'-thioadenosine phosphorylase (mtap).